The following is a 304-amino-acid chain: dTDP-4-dehydrorhamnose reductase (304 aa).

NADH contacts are provided by residues 15 to 17 (GQL), 41 to 42 (DI), and 63 to 65 (AYT). NADPH contacts are provided by residues 16 to 17 (QL), 41 to 42 (DI), and 63 to 65 (AYT). 104–105 (TD) contacts dTDP-beta-L-rhamnose. Residues Y132 and K136 each contribute to the NADH site. NADPH-binding residues include Y132 and K136. Y132 serves as the catalytic Proton donor/acceptor. W157 is a dTDP-beta-L-rhamnose binding site.

Belongs to the dTDP-4-dehydrorhamnose reductase family. Requires Mg(2+) as cofactor.

It catalyses the reaction dTDP-beta-L-rhamnose + NADP(+) = dTDP-4-dehydro-beta-L-rhamnose + NADPH + H(+). It functions in the pathway carbohydrate biosynthesis; dTDP-L-rhamnose biosynthesis. Involved in the biosynthesis of the dTDP-L-rhamnose which is a component of the critical linker, D-N-acetylglucosamine-L-rhamnose disaccharide, which connects the galactan region of arabinogalactan to peptidoglycan via a phosphodiester linkage. Catalyzes the reduction of dTDP-6-deoxy-L-lyxo-4-hexulose to yield dTDP-L-rhamnose. The polypeptide is dTDP-4-dehydrorhamnose reductase (Mycobacterium tuberculosis (strain CDC 1551 / Oshkosh)).